A 94-amino-acid chain; its full sequence is DNA gyrase subunit A (94 aa).

Residues 35–94 (LPDVRDGLKPVHRRILYGLNEQGMTPDKPYKKSARIVGDVMGKYHPHGDSSIYEAMVRMA) enclose the Topo IIA-type catalytic domain.

This sequence belongs to the type II topoisomerase GyrA/ParC subunit family. As to quaternary structure, heterotetramer, composed of two GyrA and two GyrB chains. In the heterotetramer, GyrA contains the active site tyrosine that forms a transient covalent intermediate with DNA, while GyrB binds cofactors and catalyzes ATP hydrolysis.

It is found in the cytoplasm. It carries out the reaction ATP-dependent breakage, passage and rejoining of double-stranded DNA.. Its function is as follows. A type II topoisomerase that negatively supercoils closed circular double-stranded (ds) DNA in an ATP-dependent manner to modulate DNA topology and maintain chromosomes in an underwound state. Negative supercoiling favors strand separation, and DNA replication, transcription, recombination and repair, all of which involve strand separation. Also able to catalyze the interconversion of other topological isomers of dsDNA rings, including catenanes and knotted rings. Type II topoisomerases break and join 2 DNA strands simultaneously in an ATP-dependent manner. The polypeptide is DNA gyrase subunit A (Staphylococcus epidermidis).